Here is a 741-residue protein sequence, read N- to C-terminus: Ethylene receptor 2 (741 aa).

The next 3 membrane-spanning stretches (helical) occupy residues 23–43 (ISDF…IYFV), 53–73 (WVLV…LINL), and 92–112 (IMTA…IPDL). 2 residues coordinate Cu cation: C65 and H69. Residues 158-307 (DRHTILKTTL…VVADQVAVAL (150 aa)) enclose the GAF domain. The region spanning 350–589 (VMNHEMRTPM…TFVVKLGIPE (240 aa)) is the Histidine kinase domain. Position 353 is a phosphohistidine; by autocatalysis (H353). Residues 615–732 (KVLLLDDNGV…KMRNVLSNLL (118 aa)) form the Response regulatory domain. Residue D663 is modified to 4-aspartylphosphate.

Belongs to the ethylene receptor family. Homodimer; disulfide-linked. Cu cation serves as cofactor. In terms of processing, activation probably requires a transfer of a phosphate group between a His in the transmitter domain and an Asp of the receiver domain.

The protein localises to the endoplasmic reticulum membrane. It carries out the reaction ATP + protein L-histidine = ADP + protein N-phospho-L-histidine.. Functionally, may act early in the ethylene signal transduction pathway, possibly as an ethylene receptor, or as a regulator of the pathway. In Pelargonium hortorum (Common geranium), this protein is Ethylene receptor 2 (ETR2).